We begin with the raw amino-acid sequence, 77 residues long: MAVFDDVRDVVVEQLSVDPEAVKMESKIIEDLGADSLDVVELVMALEEKFEVEIPDTEAEKLISIADVVNYIEKLGK.

The 76-residue stretch at 1–76 (MAVFDDVRDV…DVVNYIEKLG (76 aa)) folds into the Carrier domain. S36 carries the post-translational modification O-(pantetheine 4'-phosphoryl)serine.

Belongs to the acyl carrier protein (ACP) family. In terms of processing, 4'-phosphopantetheine is transferred from CoA to a specific serine of apo-ACP by AcpS. This modification is essential for activity because fatty acids are bound in thioester linkage to the sulfhydryl of the prosthetic group.

Its subcellular location is the cytoplasm. It participates in lipid metabolism; fatty acid biosynthesis. Functionally, carrier of the growing fatty acid chain in fatty acid biosynthesis. The polypeptide is Acyl carrier protein (Campylobacter curvus (strain 525.92)).